Here is a 409-residue protein sequence, read N- to C-terminus: Peptidase T (409 aa).

Residue H80 participates in Zn(2+) binding. D82 is an active-site residue. A Zn(2+)-binding site is contributed by D143. Residue E177 is the Proton acceptor of the active site. E178, D200, and H382 together coordinate Zn(2+).

It belongs to the peptidase M20B family. Zn(2+) is required as a cofactor.

Its subcellular location is the cytoplasm. It carries out the reaction Release of the N-terminal residue from a tripeptide.. In terms of biological role, cleaves the N-terminal amino acid of tripeptides. The polypeptide is Peptidase T (Enterococcus faecalis (strain ATCC 700802 / V583)).